Consider the following 403-residue polypeptide: Nodal homolog (403 aa).

A signal peptide spans 1–18 (MAFLTAVLCFGFACMVQG). The propeptide occupies 19–278 (VPSWLESRIP…RMPGIRRHRR (260 aa)). 3 N-linked (GlcNAc...) asparagine glycosylation sites follow: N68, N133, and N169. The tract at residues 195–220 (AERGSGMSSAEFLDSPGDSPQYNPHH) is disordered. 3 disulfides stabilise this stretch: C303/C369, C332/C400, and C336/C402. N-linked (GlcNAc...) asparagine glycosylation is present at N341.

The protein belongs to the TGF-beta family. In terms of assembly, homodimer; disulfide-linked. Interacts with, and is inhibited by cer1 and gdf10/bmp3b.

It is found in the secreted. Cooperation and regulatory loops of multiple nodals are essential for mesendoderm patterning in early embryos. Essential for mesoderm formation and axial patterning during embryonic development. Activates the activin-like signaling pathway to induce dorsal and ventral mesoderm in animal cap ectoderm. In addition, also dorsalizes ventral marginal zone (VMZ) tissues during gastrulation. Acts in a downstream signaling cascade via cripto and cer1 to mediate cardiogenesis in embryonic mesoderm. Directs the orientation of the left-right axis by driving the left-specific gene cascade in the left lateral plate mesoderm. The protein is Nodal homolog of Xenopus tropicalis (Western clawed frog).